Reading from the N-terminus, the 778-residue chain is Glutathione biosynthesis bifunctional protein GshAB (778 aa).

The segment at 1-354 (MVNLDKGLLK…EEFFKNHDMV (354 aa)) is glutamate--cysteine ligase. The ATP-grasp domain maps to 521 to 777 (KDILRENNIR…AGEKILDLLF (257 aa)). An ATP-binding site is contributed by 548–606 (RLFKDEKIVIKPKSTNFGLGISIFPGEYSREDYDKAVEIAFREDSSILIEEFMTGKEYR). The Mg(2+) site is built by aspartate 728, glutamate 747, and asparagine 749. The Mn(2+) site is built by aspartate 728, glutamate 747, and asparagine 749.

It in the N-terminal section; belongs to the glutamate--cysteine ligase type 1 family. Type 2 subfamily. In terms of assembly, monomer. The cofactor is Mg(2+). It depends on Mn(2+) as a cofactor.

The catalysed reaction is L-cysteine + L-glutamate + ATP = gamma-L-glutamyl-L-cysteine + ADP + phosphate + H(+). It catalyses the reaction gamma-L-glutamyl-L-cysteine + glycine + ATP = glutathione + ADP + phosphate + H(+). The protein operates within sulfur metabolism; glutathione biosynthesis; glutathione from L-cysteine and L-glutamate: step 1/2. It functions in the pathway sulfur metabolism; glutathione biosynthesis; glutathione from L-cysteine and L-glutamate: step 2/2. Its function is as follows. Synthesizes glutathione from L-glutamate and L-cysteine via gamma-L-glutamyl-L-cysteine. The polypeptide is Glutathione biosynthesis bifunctional protein GshAB (Clostridium perfringens (strain 13 / Type A)).